The primary structure comprises 596 residues: Heat shock factor protein 5 (596 aa).

Residues 10 to 200 (NPNNFPAKLW…FHRSFRRDSL (191 aa)) mediate DNA binding. The disordered stretch occupies residues 541-576 (EMGPASKPSEDTGLATPARYREHRSNSQQGKSPDLH). Residue Ser-572 is modified to Phosphoserine.

This sequence belongs to the HSF family. As to quaternary structure, homooligomer.

The protein resides in the nucleus. Its subcellular location is the chromosome. In terms of biological role, DNA-binding transcription factor that is essential for male fertility, spermatogenesis and meiotic prophase progression in spermatocytes under non-stress conditions. Positvely and negatively regulates gene expression to ensure progression of meiotic prophase beyond pachytene stage in spermatocytes. Plays a role in male germline meiotic sex chromosome remodeling and silencing through regulation of SMARCA4. This Homo sapiens (Human) protein is Heat shock factor protein 5 (HSF5).